Here is a 485-residue protein sequence, read N- to C-terminus: NADH-quinone oxidoreductase subunit N (485 aa).

The next 14 helical transmembrane spans lie at Leu8–Ile28, Phe35–Val55, Gly71–Ala91, Phe105–Leu125, Ser127–Phe147, Tyr159–Ala179, Leu203–Phe223, Pro235–Met255, Val271–Gln291, Leu297–Gln317, Val326–Leu346, Ala373–Ile393, Trp408–Val430, and Ile455–Ile475.

It belongs to the complex I subunit 2 family. In terms of assembly, NDH-1 is composed of 13 different subunits. Subunits NuoA, H, J, K, L, M, N constitute the membrane sector of the complex.

The protein localises to the cell inner membrane. It carries out the reaction a quinone + NADH + 5 H(+)(in) = a quinol + NAD(+) + 4 H(+)(out). Functionally, NDH-1 shuttles electrons from NADH, via FMN and iron-sulfur (Fe-S) centers, to quinones in the respiratory chain. The immediate electron acceptor for the enzyme in this species is believed to be ubiquinone. Couples the redox reaction to proton translocation (for every two electrons transferred, four hydrogen ions are translocated across the cytoplasmic membrane), and thus conserves the redox energy in a proton gradient. The chain is NADH-quinone oxidoreductase subunit N from Escherichia coli O7:K1 (strain IAI39 / ExPEC).